The sequence spans 634 residues: 1-deoxy-D-xylulose-5-phosphate synthase (634 aa).

Residues His77 and 118-120 contribute to the thiamine diphosphate site; that span reads GHA. Asp149 provides a ligand contact to Mg(2+). Thiamine diphosphate is bound by residues 150 to 151, Asn178, Tyr289, and Glu371; that span reads AS. Asn178 serves as a coordination point for Mg(2+).

Belongs to the transketolase family. DXPS subfamily. Homodimer. Mg(2+) serves as cofactor. Thiamine diphosphate is required as a cofactor.

The catalysed reaction is D-glyceraldehyde 3-phosphate + pyruvate + H(+) = 1-deoxy-D-xylulose 5-phosphate + CO2. Its pathway is metabolic intermediate biosynthesis; 1-deoxy-D-xylulose 5-phosphate biosynthesis; 1-deoxy-D-xylulose 5-phosphate from D-glyceraldehyde 3-phosphate and pyruvate: step 1/1. Functionally, catalyzes the acyloin condensation reaction between C atoms 2 and 3 of pyruvate and glyceraldehyde 3-phosphate to yield 1-deoxy-D-xylulose-5-phosphate (DXP). This Leptospira interrogans serogroup Icterohaemorrhagiae serovar copenhageni (strain Fiocruz L1-130) protein is 1-deoxy-D-xylulose-5-phosphate synthase.